We begin with the raw amino-acid sequence, 241 residues long: ATP synthase subunit a (241 aa).

The next 5 membrane-spanning stretches (helical) occupy residues 30-50, 91-111, 128-148, 193-213, and 214-234; these read GQVFLTSWILLGALLVFISVG, FIGTLFLFVFVSNWGGALIPW, INTTIALALLVSLSYFYAGLS, LVVGVLVFLVPLVLPIPVMFL, and GLFTSAIQALIFATLAAYYIG.

Belongs to the ATPase A chain family. In terms of assembly, F-type ATPases have 2 components, CF(1) - the catalytic core - and CF(0) - the membrane proton channel. CF(1) has five subunits: alpha(3), beta(3), gamma(1), delta(1), epsilon(1). CF(0) has four main subunits: a, b, b' and c.

The protein localises to the cellular thylakoid membrane. Its function is as follows. Key component of the proton channel; it plays a direct role in the translocation of protons across the membrane. The polypeptide is ATP synthase subunit a (Prochlorococcus marinus subsp. pastoris (strain CCMP1986 / NIES-2087 / MED4)).